A 91-amino-acid polypeptide reads, in one-letter code: Small membrane A-kinase anchor protein (91 aa).

A lipid anchor (N-myristoyl glycine) is attached at Gly-2.

This sequence belongs to the small membrane AKAP family. In terms of processing, may be palmitoylated at Cys-3.

It localises to the cell membrane. Binds to type I regulatory subunits of protein kinase A and may anchor/target them to the plasma membrane. The protein is Small membrane A-kinase anchor protein of Xenopus laevis (African clawed frog).